A 539-amino-acid chain; its full sequence is Chaperonin GroEL (539 aa).

Residues 29-32 (TLGP), 86-90 (DGTTT), G413, and D494 contribute to the ATP site.

The protein belongs to the chaperonin (HSP60) family. As to quaternary structure, forms a cylinder of 14 subunits composed of two heptameric rings stacked back-to-back. Interacts with the co-chaperonin GroES.

It localises to the cytoplasm. The catalysed reaction is ATP + H2O + a folded polypeptide = ADP + phosphate + an unfolded polypeptide.. Its function is as follows. Together with its co-chaperonin GroES, plays an essential role in assisting protein folding. The GroEL-GroES system forms a nano-cage that allows encapsulation of the non-native substrate proteins and provides a physical environment optimized to promote and accelerate protein folding. The chain is Chaperonin GroEL from Finegoldia magna (strain ATCC 29328 / DSM 20472 / WAL 2508) (Peptostreptococcus magnus).